Consider the following 76-residue polypeptide: UPF0346 protein LBA0976 (76 aa).

It belongs to the UPF0346 family.

The protein is UPF0346 protein LBA0976 of Lactobacillus acidophilus (strain ATCC 700396 / NCK56 / N2 / NCFM).